A 164-amino-acid chain; its full sequence is UPF0304 protein Ent638_2838 (164 aa).

The protein belongs to the UPF0304 family.

The sequence is that of UPF0304 protein Ent638_2838 from Enterobacter sp. (strain 638).